Reading from the N-terminus, the 849-residue chain is Rho guanine nucleotide exchange factor 15 (849 aa).

Disordered regions lie at residues 1 to 146, 159 to 202, and 277 to 308; these read MSAQ…ASAP, GAEG…NGTP, and LPPLKPPKPTKVRQDISTSEELPQPDLKLPSE. A compositionally biased stretch (basic residues) spans 18–31; sequence RIIRPRPPSRHRAP. Residues 48–59 are compositionally biased toward polar residues; the sequence is QISNDASASVCT. Positions 65 to 110 are enriched in low complexity; it reads PPTASLKPPALLPPSVSRTSLDSQTSPDSPSSTPSPSPVSRRSISP. A phosphoserine mark is found at Ser-107 and Ser-109. Residues 111–123 show a composition bias toward pro residues; it reads EPAPCSPVPPPKP. Residues 164–180 show a composition bias toward polar residues; that stretch reads AQSSDSLERCSQGSTEV. Phosphotyrosine; by EPHB2 is present on Tyr-361. Positions 425-609 constitute a DH domain; sequence RMQESLFEVV…SKIIERCSAE (185 aa). Polar residues-rich tracts occupy residues 771–786 and 840–849; these read CSEPSTPSKTEGQSLE and SSGTPDTPQP. 2 disordered regions span residues 771 to 803 and 819 to 849; these read CSEPSTPSKTEGQSLESKAPRKHLHKNPEGWLK and GEHERRKHLRQHQKLLEAVGPSSGTPDTPQP.

In terms of assembly, interacts with EPHA4. Interacts with EPHB2. Phosphorylated on tyrosine residues upon EFNA1 stimulation. EPHB2-dependent phosphorylation at Tyr-361 triggers UBE3A-mediated ubiquitination. Post-translationally, ubiquitinated; UBE3A-mediated ubiquitination and degradation by the proteasome promotes EFNB1-dependent synapse formation. As to expression, at P12, expressed is detected in the CA1 region and the dentate gyrus of the hippocampus.

Its subcellular location is the cell projection. The protein resides in the dendrite. In terms of biological role, specific GEF for RhoA activation. Does not activate RAC1 or CDC42. Regulates vascular smooth muscle contractility. Negatively regulates excitatory synapse development by suppressing the synapse-promoting activity of EPHB2. The chain is Rho guanine nucleotide exchange factor 15 (Arhgef15) from Mus musculus (Mouse).